We begin with the raw amino-acid sequence, 919 residues long: Protein phosphatase 1 regulatory subunit 37 (919 aa).

LRR repeat units lie at residues 340–361, 368–388, 396–417, 425–445, 454–474, and 482–502; these read SLQYLDARNTPLLDHSAPFVAR, SLTVLHLENSGISGRPLMLLA, NLRELYLAENKLNGLQDSAQLG, NIQILDLRNNHILDSGLAYVC, GLVTLVLWNNQLTHNGMGYLA, and SLETLNLGHNAVGNEGVHKLK. Disordered stretches follow at residues 626–716 and 790–866; these read ATED…TIPS and APSQ…APLP. The span at 631-640 shows a compositional bias: acidic residues; it reads THEEEEEEEA. The span at 641-658 shows a compositional bias: basic and acidic residues; that stretch reads SPLKKIEEETTDALKDAT. Positions 677–690 are enriched in acidic residues; it reads PQDDSDSDTEDEET. Residues 691-701 are compositionally biased toward low complexity; sequence PTNTSLTSTSP. Polar residues-rich tracts occupy residues 791 to 801 and 811 to 837; these read PSQTQNSTQPT and DAQQEDSVSTSTPSLDANIDQTQLTES. Positions 833–861 form a coiled coil; the sequence is QLTESVSEEEQKKAETLNNEADINEDANT.

Belongs to the PPP1R37 family.

May inhibit phosphatase activity of protein phosphatase 1 (PP1) complexes. The sequence is that of Protein phosphatase 1 regulatory subunit 37 (ppp1r37) from Danio rerio (Zebrafish).